Consider the following 412-residue polypeptide: Eukaryotic initiation factor 4A-1 (412 aa).

An N-acetylalanine modification is found at Ala-2. The Q motif signature appears at Glu-39 to Gln-67. The region spanning Ile-70–Ile-240 is the Helicase ATP-binding domain. Residue Ala-83 to Thr-90 participates in ATP binding. Phosphoserine is present on Ser-104. At Thr-145 the chain carries Phosphothreonine. The short motif at Asp-188–Asp-191 is the DEAD box element. Residues Gly-251 to Leu-412 enclose the Helicase C-terminal domain.

The protein belongs to the DEAD box helicase family. eIF4A subfamily. In terms of assembly, eIF4F is a multi-subunit complex, the composition of which varies with external and internal environmental conditions. It is composed of at least EIF4A, EIF4E and EIF4G. Interacts with CDKA-1. Interacts with MRF1, MRF2, MRF3/ECIP1 and MRF4. Highly expressed in the whole plant.

It localises to the cytoplasm. The enzyme catalyses ATP + H2O = ADP + phosphate + H(+). In terms of biological role, ATP-dependent RNA helicase which is a subunit of the eIF4F complex involved in cap recognition and is required for mRNA binding to ribosome. In the current model of translation initiation, eIF4A unwinds RNA secondary structures in the 5'-UTR of mRNAs which is necessary to allow efficient binding of the small ribosomal subunit, and subsequent scanning for the initiator codon. This chain is Eukaryotic initiation factor 4A-1, found in Arabidopsis thaliana (Mouse-ear cress).